The following is a 176-amino-acid chain: Late embryogenesis abundant protein 49 (176 aa).

2 consecutive SMP domains span residues 49-106 and 115-171; these read TTLT…RNQK and NLGD…KLNH.

The protein belongs to the LEA type SMP family.

The protein resides in the cytoplasm. It is found in the nucleus. In terms of biological role, LEA proteins are late embryonic proteins abundant in higher plant seed embryos. The function of those proteins is not known. In Arabidopsis thaliana (Mouse-ear cress), this protein is Late embryogenesis abundant protein 49.